The chain runs to 218 residues: Ribonuclease T (218 aa).

In terms of domain architecture, Exonuclease spans 24 to 198 (VIIDVETAGF…YDAERTAELF (175 aa)). Residues Asp27, Glu29, His185, and Asp190 each contribute to the Mg(2+) site. The Proton donor/acceptor role is filled by His185.

The protein belongs to the RNase T family. In terms of assembly, homodimer. It depends on Mg(2+) as a cofactor.

Its function is as follows. Trims short 3' overhangs of a variety of RNA species, leaving a one or two nucleotide 3' overhang. Responsible for the end-turnover of tRNA: specifically removes the terminal AMP residue from uncharged tRNA (tRNA-C-C-A). Also appears to be involved in tRNA biosynthesis. In Histophilus somni (strain 129Pt) (Haemophilus somnus), this protein is Ribonuclease T.